Reading from the N-terminus, the 459-residue chain is MFRTTKSRVVEKNQNFSSASFESLSYPTRLNFYKKPPVSEISIEEFETWAIDRLVVLGEIESAMLRNKTKNELNGIIKKILDKRLPMSSNMARTVKGNSLDEERRKDHYSHFILRLAFSRSDELRIRFLRAESTLFRFRFVNEETRERQAFIDSLDFQWESVSQEEKDVFYEKLQASSQRNIENESFFKVPFFKVPDLVERRAVFVHKGYAYVPFSEQVSLVVEEFEENLKKALESTAKSLPRLDEDDRLLPILNHLSKGFVAPESSIVAPKSGAITAGQVDSFVSHFPLCAKHLHEVLKRDKHLRHFGRLQYGLFLKDIGLSVDEALVFWRKSFTNVTEDKFNKEYRYNIRHTYGLEGNRKNYKGYNCQQILTGPQLGPGDAHGCPYRTYSVNNLVSALASMGIAPDSAGCREVVEAVKARHYHIACTRVFELTHPNVGSLEESIHHPLQYFQLSLES.

4 residues coordinate [4Fe-4S] cluster: Cys-291, Cys-369, Cys-386, and Cys-428.

The protein belongs to the eukaryotic-type primase large subunit family. Heterodimer of a catalytic subunit spp1/pri1 and a regulatory subunit spp2/pri2, also known as the DNA primase complex. Component of the alpha DNA polymerase complex (also known as the alpha DNA polymerase-primase complex) consisting of four subunits: the catalytic subunit pol1, the accessory subunit spb70/pol12, and the primase complex subunits spp1/pri1 and spp2/pri2 respectively. Interacts with orc2; preferentially associates with the unphosphorylated orc2 in G1 pre-Start prior to orc2 being phosphorylated by cdc2, the interaction is mediated by spb70 and might enable the association of the whole alpha DNA polymerase complex to orc2/spb70 complex on chromatin. [4Fe-4S] cluster is required as a cofactor.

The protein resides in the nucleus. It localises to the chromosome. Its function is as follows. Regulatory subunit of the DNA primase complex and component of the DNA polymerase alpha complex (also known as the alpha DNA polymerase-primase complex - primosome/replisome) which play an essential role in the initiation of DNA synthesis. During the S phase of the cell cycle, the DNA polymerase alpha complex (composed of a catalytic subunit pol1, an accessory subunit spb70/pol12 and two primase subunits, the catalytic subunit spp1/pri1 and the regulatory subunit spp2/pri2) is recruited to DNA at the replicative forks. The primase subunit of the polymerase alpha complex initiates DNA synthesis by oligomerising short RNA primers on both leading and lagging strands. This chain is DNA primase large subunit, found in Schizosaccharomyces pombe (strain 972 / ATCC 24843) (Fission yeast).